Reading from the N-terminus, the 492-residue chain is Diacylglycerol kinase 7 (492 aa).

Residues 90 to 248 (APHAPMVVFI…SWKIVVSMPS (159 aa)) enclose the DAGKc domain.

It belongs to the eukaryotic diacylglycerol kinase family. Monomer. As to expression, highly expressed in flowers, and at low levels in roots, stems and leaves.

It carries out the reaction a 1,2-diacyl-sn-glycerol + ATP = a 1,2-diacyl-sn-glycero-3-phosphate + ADP + H(+). Phosphorylates the second messenger diacylglycerol (DAG) to generate phosphatidic acid (PA), another important signaling molecule. PA is required for plant development and responses to abiotic stress and pathogen attack. May be involved in the accumulation of PA during cold stress xhibits high specificity for 1,2-dioleoyl-sn-glycerol (1,2-DOG), 1-palmitoyl, 2-oleoyl-sn-glycerol (1,2 POG), 1-stearoyl, 2-linoleoyl-sn-glycerol (1,2-SLG) and 1-oleoyl, 2-palmitoyl-sn-glycerol (1,2-OPG). This Arabidopsis thaliana (Mouse-ear cress) protein is Diacylglycerol kinase 7 (DGK7).